Reading from the N-terminus, the 134-residue chain is Agouti-related protein (134 aa).

A signal peptide spans 1 to 20 (MLTTMLLSCALLLAMPTMLG). Positions 21-84 (AQIGLAPLEG…VLDPEGRKAR (64 aa)) are excised as a propeptide. 5 disulfide bridges follow: Cys-89–Cys-104, Cys-96–Cys-110, Cys-103–Cys-121, Cys-107–Cys-131, and Cys-112–Cys-119. The Agouti domain maps to 89-131 (CVRLHESCLGHQVPCCDPCATCYCRFFNAFCYCRKLGTATNPC). Positions 113-115 (RFF) are interaction with melanocortin receptors.

As to quaternary structure, interacts with melanocortin receptors MC3R, MC4R and MC5R.

The protein resides in the secreted. Its subcellular location is the golgi apparatus lumen. Plays a role in weight homeostasis. Involved in the control of feeding behavior through the central melanocortin system. Acts as alpha melanocyte-stimulating hormone antagonist by inhibiting cAMP production mediated by stimulation of melanocortin receptors within the hypothalamus and adrenal gland. Has very low activity with MC5R. Is an inverse agonist for MC3R and MC4R being able to suppress their constitutive activity. It promotes MC3R and MC4R endocytosis in an arrestin-dependent manner. The polypeptide is Agouti-related protein (AGRP) (Sus scrofa (Pig)).